The chain runs to 1480 residues: MSHSMSSSSSSSSSSSSSRDEGQSRLNNVLSNIAKQCRTTSAQVQDVYPCTPLQQGLFALSLTSPGAYMAQHVFRLQPFVDQGRMKQAWNVVLQKHAILRTRIVMLGENAMQVVLKQSPEWRNCSDLRAYLDADQSITLQTGEPLTRWAISDTHLVWSAHHSVYDGFSVELILRDVATAYADGEIPPRPSFRQFIQRMFQQKQKSLTEAYWKKKTAHLDEVDTFPRLPASTYRPRPNSVYKHESSLAIDGPSGVTLSTIANAAWGLVQSSHLGSEQVSFGTTLSGRNANMPDIDKVVGPTLATVPVLLDVRSSQSVADFLQATQAYFTELIPHQHIGLQNLRRLNRATEAVCNFQTLFAFQPGMTETQGQSPYGHLLTAENKDKVEAAFYSYALTFQCSLAGTGIIKVLASYDDKIISSSQMKRLVFQFEHIVSQLISSNGSKRLSEIQLISPQDLDQLDIWKRKMESYEQLLPLDAIQRHIDTRPDATAVAAWDGTLSYVELDAFATRLATWLVHEQKVGPEIVIPICFDRSQWMIVSIFGVLKAGGAFLLLDPIYPENRLRYMIKMVNARTILVSESCRARFEGVPGAILAVNAAWFETHTHASIPMRELPVDRALYLVFTSGSTGQPKGVIVTHASYAASAAGHMPALGMNENTRQLFFASPAFDLSIYEILGSLMCGGTVCVPTEEDRNGSVAPVIRDMNVNLISLTSSYARHLRPEDVPRLETLALVGEPLARDVQRVWANRLTLINAYGPAECSVVSTVKRPVTLDSNPANIGTTVAGRAWVVHPKDHEILLPIGATGELLLEGDHLARGYLNDEEKTAAAYIFGPYWAPSPTPRRFYKTGDLVHFDEDGSIVFEGRKDSQVKIRGQRVEIAEIEHHLARLFPNAAGAAVDVFKHEYHVHLVAFLFCDKESWNSSDTPADILQRLGDVNVSTMSHIKQQLEQVMPHHMVPTRYQIWARMPTSLAGKLDRKALRKELGNQSTTVIELDETSTEFPVIDSTNKVALRLNHKILDLASEEKTTLDGRDFPLSILGLDSIQLITIVTFIRSEYGAKMTVETLYDLKLTVTGLAAMITSPHDRPAEAAPTLDLSKELQRVYRELTRRSESIKHKRKVFLTGATGLLGSQILRQLLADPSVQRVIVHVRANDAAKGMARVVSAATLAKWWSSSYANRVECWPGDLGMPQLGLQPEQWRMLCGTADAGAPITSVIHNGAAVQWQAPYQALKAVNVDSTVELLTAMAQWSEPGSFTFVSGGLKRSPGQDLESFMKSLEQANGYSQSKFVAEELVSRFAGHQSTHRVSIVRPGWVIGTEKDAVPNTDDFLWKLVQACIQIGAYPAEGGDLWLAVADAEEVATRILATTFAASGESPSVDNVEIGTTVSRFWELIKVQTGMELTQMSAEDWKQAAQDFAASQESEQTFLPVLAMLQDPQMEFGVQRPANGGPPSNVNAAIRSNIKTLVETGFLSDSSEVVIVED.

Positions 1 to 17 (MSHSMSSSSSSSSSSSS) are enriched in low complexity. Residues 1–24 (MSHSMSSSSSSSSSSSSSRDEGQS) form a disordered region. The tract at residues 44–458 (VQDVYPCTPL…QLISPQDLDQ (415 aa)) is condensation. The tract at residues 479 to 871 (QRHIDTRPDA…GRKDSQVKIR (393 aa)) is adenylation. A Carrier domain is found at 1003–1082 (DSTNKVALRL…GLAAMITSPH (80 aa)). Serine 1041 carries the post-translational modification O-(pantetheine 4'-phosphoryl)serine. The interval 1117-1436 (KVFLTGATGL…VLAMLQDPQM (320 aa)) is thioesterase (TE) domain.

The protein belongs to the NRP synthetase family.

It functions in the pathway secondary metabolite biosynthesis. In terms of biological role, nonribosomal peptide synthetase; part of the inp gene cluster that mediates the biosynthesis of fellutamide B, a mycotoxin that acts as a proteasome inhibitor. In the first step of fellutabmide B biosynthesis, inpC activates 3-hydroxydodecanoic acid to generate 3-hydroxydodecanoyl-AMP that is then loaded onto the T0 domain of inpB. The 3-hydroxydodecanoyl-S-phosphopantetheinyl-T0 is sequentially extended with L-Asn and L-Gln by the two CAT modules of inpB. The linear lipodipeptide from inpB is then transferred onto inpA for the addition of the third amino acid, L-Leu. Reductive releasing of the lipotripeptide by the TE domain of inpA produces (2S)-fellutamide B. InpF might be involved in the release and transfer of the lipodipeptide from inpB to inpA. The inp cluster-encoded proteasome subunit inpE confers resistance to internally produced fellutamides. The MFS efflux transporter inpD may contribute to fellutamide resistance as well. The polypeptide is Nonribosomal peptide synthetase inpA (Emericella nidulans (strain FGSC A4 / ATCC 38163 / CBS 112.46 / NRRL 194 / M139) (Aspergillus nidulans)).